Here is a 72-residue protein sequence, read N- to C-terminus: DNA-directed RNA polymerase subunit omega (72 aa).

The protein belongs to the RNA polymerase subunit omega family. The RNAP catalytic core consists of 2 alpha, 1 beta, 1 beta' and 1 omega subunit. When a sigma factor is associated with the core the holoenzyme is formed, which can initiate transcription.

The catalysed reaction is RNA(n) + a ribonucleoside 5'-triphosphate = RNA(n+1) + diphosphate. In terms of biological role, promotes RNA polymerase assembly. Latches the N- and C-terminal regions of the beta' subunit thereby facilitating its interaction with the beta and alpha subunits. This is DNA-directed RNA polymerase subunit omega from Francisella tularensis subsp. holarctica (strain LVS).